We begin with the raw amino-acid sequence, 1244 residues long: MTVFLGIYRAVYAYEPQTPEELAIQEDDLLYLLQKSDIDDWWTVKKRVIGSDSEEPVGLVPSTYIEEAPVLKKVRAIYDYEQVQNADEELTFHENDVFDVFDDKDADWLLVKSTVSNEFGFIPGNYVEPENGSTSKQEQAPAAAEAPAATPAAAPASAAVLPTNFLPPPQHNDRARMMQSKEDQAPDEDEEGPPPAMPARPTATTETTDATAAAVRSRTRLSYSDNDNDDEEDDYYYNSNSNNVGNHEYNTEYHSWNVTEIEGRKKKKAKLSIGNNKINFIPQKGTPHEWSIDKLVSYDNEKKHMFLEFVDPYRSLELHTGNTTTCEEIMNIIGEYKGASRDPGLREVEMASKSKKRGIVQYDFMAESQDELTIKSGDKVYILDDKKSKDWWMCQLVDSGKSGLVPAQFIEPVRDKKHTESTASGIIKSIKKNFTKSPSRSRSRSRSKSNANASWKDDELQNDVVGSAAGKRSRKSSLSSHKKNSSATKDFPNPKKSRLWVDRSGTFKVDAEFIGCAKGKIHLHKANGVKIAVAADKLSNEDLAYVEKITGFSLEKFKANDGSSSRGTDSRDSERERRRRLKEQEEKERDRRLKERELYELKKARELLDEERSRLQEKELPPIKPPRPTSTTSVPNTTSVPPAESSNNNNSSNKYDWFEFFLNCGVDVSNCQRYTINFDREQLTEDMMPDINNSMLRTLGLREGDIVRVMKHLDKKFGRENIASIPTNATGNMFSQPDGSLNVATSPETSLPQQLLPQTTSPAQTAPSTSAETDDAWTVKPASKSESNLLSKKSEFTGSMQDLLDLQPLEPKKAAASTPEPNLKDLEPVKTGGTTVPAAPVSSAPVSSAPAPLDPFKTGGNNILPLSTGFVMMPMITGGDMLPMQRTGGFVVPQTTFGMQSQVTGGILPVQKTGNGLIPISNTGGAMMPQTTFGAAATVLPLQKTGGGLIPIATTGGAQFPQTSFNVQGQQQLPTGSILPVQKTANGLISANTGVSMPTVQRTGGTMIPQTSFGVSQQLTGGAMMTQPQNTGSAMMPQTSFNAVPQITGGAMMPQTSFNALPQVTGGAMMPLQRTGGALNTFNTGGAMIPQTSFSSQAQNTGGFRPQSQFGLTLQKTGGIAPLNQNQFTGGAMNTLSTGGVLQQQQPQTMNTFNTGGVMQELQMMTTFNTGGAMQQPQMMNTFNTDGIMQQPQMMNTFNTGGAMQQPQQQALQNQPTGFGFGNGPQQSRQANIFNATASNPFGF.

2 consecutive SH3 domains span residues 3-68 and 69-132; these read VFLG…IEEA and PVLK…PENG. Disordered stretches follow at residues 128 to 248 and 415 to 497; these read EPEN…GNHE and DKKH…PKKS. A compositionally biased stretch (low complexity) spans 140-159; it reads APAAAEAPAATPAAAPASAA. A compositionally biased stretch (basic and acidic residues) spans 171–184; the sequence is HNDRARMMQSKEDQ. The segment covering 199–214 has biased composition (low complexity); it reads ARPTATTETTDATAAA. Residues 226–235 are compositionally biased toward acidic residues; that stretch reads NDNDDEEDDY. Residues 353–415 form the SH3 3 domain; it reads KSKKRGIVQY…PAQFIEPVRD (63 aa). Residues 429-447 are compositionally biased toward basic residues; it reads SIKKNFTKSPSRSRSRSRS. S447, S449, and S454 each carry phosphoserine. Residues K471 and K548 each participate in a glycyl lysine isopeptide (Lys-Gly) (interchain with G-Cter in ubiquitin) cross-link. Residues 471 to 484 are compositionally biased toward basic residues; the sequence is KRSRKSSLSSHKKN. Disordered regions lie at residues 558 to 592, 610 to 649, and 726 to 791; these read KAND…RDRR, EERS…SNNN, and PTNA…NLLS. Composition is skewed to basic and acidic residues over residues 568–592 and 610–621; these read TDSR…RDRR and EERSRLQEKELP. Over residues 629 to 649 the composition is skewed to low complexity; sequence TSTTSVPNTTSVPPAESSNNN. Residues 726-756 are compositionally biased toward polar residues; that stretch reads PTNATGNMFSQPDGSLNVATSPETSLPQQLL. The segment covering 757–771 has biased composition (low complexity); that stretch reads PQTTSPAQTAPSTSA. Position 799 is a phosphoserine (S799). Residues 813 to 853 form a disordered region; the sequence is KAAASTPEPNLKDLEPVKTGGTTVPAAPVSSAPVSSAPAPL. The residue at position 831 (T831) is a Phosphothreonine. Low complexity predominate over residues 836 to 851; it reads VPAAPVSSAPVSSAPA. T858 is subject to Phosphothreonine. 3 consecutive repeat copies span residues 868–874, 877–883, and 887–893. The 16 X 7 AA approximate repeats of T-G-G-A-M-M-P stretch occupies residues 868 to 1205; the sequence is TGFVMMPMIT…NTFNTGGAMQ (338 aa). 2 positions are modified to phosphothreonine: T887 and T904. 2 repeat units span residues 923–929 and 945–951. T984 and T993 each carry phosphothreonine. Phosphoserine is present on S996. 5 consecutive repeat copies span residues 1003-1009, 1020-1026, 1031-1037, 1048-1054, and 1065-1071. T1075 is modified (phosphothreonine). Repeat copies occupy residues 1084–1090, 1129–1135, 1155–1161, 1170–1176, 1185–1191, and 1200–1206.

This sequence belongs to the SLA1 family. In terms of assembly, component of the PAN1 actin cytoskeleton-regulatory complex. Interacts with ABP1, KRE6, LAS17, LSB5, RSP5, RVS167, VPS1 and YSC84. In terms of processing, phosphorylated by PRK1.

The protein localises to the nucleus. It localises to the cell membrane. It is found in the endosome membrane. The protein resides in the cytoplasm. Its subcellular location is the cytoskeleton. The protein localises to the actin patch. In terms of biological role, component of the PAN1 actin cytoskeleton-regulatory complex required for the internalization of endosomes during actin-coupled endocytosis. The complex links the site of endocytosis to the cell membrane-associated actin cytoskeleton. Mediates uptake of external molecules and vacuolar degradation of plasma membrane proteins. Plays a role in the proper organization of the cell membrane-associated actin cytoskeleton and promotes its destabilization. The protein is Actin cytoskeleton-regulatory complex protein SLA1 (SLA1) of Saccharomyces cerevisiae (strain ATCC 204508 / S288c) (Baker's yeast).